Consider the following 236-residue polypeptide: Ubiquinone biosynthesis O-methyltransferase (236 aa).

S-adenosyl-L-methionine is bound by residues Arg39, Gly59, Asp80, and Met124.

This sequence belongs to the methyltransferase superfamily. UbiG/COQ3 family.

It carries out the reaction a 3-demethylubiquinol + S-adenosyl-L-methionine = a ubiquinol + S-adenosyl-L-homocysteine + H(+). It catalyses the reaction a 3-(all-trans-polyprenyl)benzene-1,2-diol + S-adenosyl-L-methionine = a 2-methoxy-6-(all-trans-polyprenyl)phenol + S-adenosyl-L-homocysteine + H(+). Its pathway is cofactor biosynthesis; ubiquinone biosynthesis. O-methyltransferase that catalyzes the 2 O-methylation steps in the ubiquinone biosynthetic pathway. The protein is Ubiquinone biosynthesis O-methyltransferase of Shewanella sp. (strain MR-7).